A 288-amino-acid chain; its full sequence is Elongation factor Ts (288 aa).

The interval 80–83 (TDFV) is involved in Mg(2+) ion dislocation from EF-Tu.

It belongs to the EF-Ts family.

Its subcellular location is the cytoplasm. In terms of biological role, associates with the EF-Tu.GDP complex and induces the exchange of GDP to GTP. It remains bound to the aminoacyl-tRNA.EF-Tu.GTP complex up to the GTP hydrolysis stage on the ribosome. The sequence is that of Elongation factor Ts from Chromobacterium violaceum (strain ATCC 12472 / DSM 30191 / JCM 1249 / CCUG 213 / NBRC 12614 / NCIMB 9131 / NCTC 9757 / MK).